Consider the following 133-residue polypeptide: Profilin (133 aa).

It belongs to the profilin family. In terms of assembly, interacts with host TPM1. Interacts with protein A25.

The protein resides in the host cytoplasm. Participates in either intracellular transport of viral proteins or intercellular spread of the virus. Cellular profilins modulate actin filament dynamics (polymerization and depolymerization) via direct binding to actin through an actin-binding domain as well as by modulation of other actin-binding proteins. In contrast to cellular homologs, the poxvirus profilins seem to bind actin only weakly. In Variola virus (isolate Human/India/Ind3/1967) (VARV), this protein is Profilin (OPG171).